Consider the following 230-residue polypeptide: Terminal protein (230 aa).

Positions 222–230 (RRRKKRGKK) match the Nuclear localization signal motif.

It is found in the host nucleus. The protein resides in the virion. DNA terminal protein is linked to the 5'-ends of both strands of the genome through a phosphodiester bond between the beta-hydroxyl group of a threonine residue and the 5'-phosphate of the terminal deoxyadenylate. This protein is essential for DNA replication and is involved in the priming of DNA elongation. The protein is Terminal protein (4) of Streptococcus pneumoniae (Bacteriophage Cp-1).